Here is a 297-residue protein sequence, read N- to C-terminus: Flavin-dependent thymidylate synthase (297 aa).

In terms of domain architecture, ThyX spans 41 to 251 (GFVRLVDYMG…PLTYAAFVEY (211 aa)). FAD contacts are provided by residues threonine 87, 110–112 (RHR), and glutamate 118. DUMP contacts are provided by residues 107-110 (QWVR), 118-122 (EYSAR), and arginine 190. The ThyX motif motif lies at 110–120 (RHRTANVNEYS). FAD is bound by residues 206-208 (DLH) and histidine 212. DUMP is bound at residue arginine 217. The active-site Involved in ionization of N3 of dUMP, leading to its activation is arginine 217.

Belongs to the thymidylate synthase ThyX family. As to quaternary structure, homotetramer. FAD is required as a cofactor.

It catalyses the reaction dUMP + (6R)-5,10-methylene-5,6,7,8-tetrahydrofolate + NADPH + H(+) = dTMP + (6S)-5,6,7,8-tetrahydrofolate + NADP(+). The protein operates within pyrimidine metabolism; dTTP biosynthesis. Its function is as follows. Catalyzes the reductive methylation of 2'-deoxyuridine-5'-monophosphate (dUMP) to 2'-deoxythymidine-5'-monophosphate (dTMP) while utilizing 5,10-methylenetetrahydrofolate (mTHF) as the methyl donor, and NADPH and FADH(2) as the reductant. This Ehrlichia ruminantium (strain Gardel) protein is Flavin-dependent thymidylate synthase.